Here is a 727-residue protein sequence, read N- to C-terminus: Glucans biosynthesis glucosyltransferase H (727 aa).

The segment at S18–P41 is disordered. 7 helical membrane-spanning segments follow: residues F58–V78, V97–L117, L278–V298, I408–A428, L460–L480, I496–I516, and L572–W592.

Belongs to the glycosyltransferase 2 family. OpgH subfamily.

It is found in the cell inner membrane. It participates in glycan metabolism; osmoregulated periplasmic glucan (OPG) biosynthesis. Its function is as follows. Involved in the biosynthesis of osmoregulated periplasmic glucans (OPGs). This chain is Glucans biosynthesis glucosyltransferase H, found in Shewanella baltica (strain OS155 / ATCC BAA-1091).